The primary structure comprises 203 residues: NAD(P)H dehydrogenase (quinone) (203 aa).

A Flavodoxin-like domain is found at 3–194 (VLIPFYSMYG…AGARYQGKYI (192 aa)). FMN contacts are provided by residues 9-14 (SMYGHI) and 82-84 (TRF). Tyr-11 is an NAD(+) binding site. Residue Trp-102 participates in substrate binding. FMN-binding positions include 117-123 (SSATQHG) and His-138.

Belongs to the WrbA family. It depends on FMN as a cofactor.

It catalyses the reaction a quinone + NADH + H(+) = a quinol + NAD(+). The catalysed reaction is a quinone + NADPH + H(+) = a quinol + NADP(+). This is NAD(P)H dehydrogenase (quinone) from Geobacter metallireducens (strain ATCC 53774 / DSM 7210 / GS-15).